The sequence spans 179 residues: Caveolin-1 (179 aa).

The residue at position 2 (serine 2) is an N-acetylserine. Serine 2 is subject to Phosphoserine. A required for homooligomerization region spans residues 2–95 (SGGKYVDSEG…WKASFTTFTV (94 aa)). Over 2 to 105 (SGGKYVDSEG…TKYWFYRLLS (104 aa)) the chain is Cytoplasmic. An N6-acetyllysine; alternate modification is found at lysine 5. A Glycyl lysine isopeptide (Lys-Gly) (interchain with G-Cter in ubiquitin); alternate cross-link involves residue lysine 5. Tyrosine 6 bears the Phosphotyrosine mark. Serine 9 is modified (phosphoserine). The residue at position 14 (tyrosine 14) is a Phosphotyrosine; by ABL1. A Phosphotyrosine modification is found at tyrosine 25. Glycyl lysine isopeptide (Lys-Gly) (interchain with G-Cter in ubiquitin) cross-links involve residues lysine 26 and lysine 30. Position 37 is a phosphoserine (serine 37). Residues lysine 39, lysine 48, and lysine 58 each participate in a glycyl lysine isopeptide (Lys-Gly) (interchain with G-Cter in ubiquitin) cross-link. Positions 83–95 (DGIWKASFTTFTV) are interaction with CAVIN3. Residues 106-126 (ALFGIPMALIWGIYFAILSFL) constitute an intramembrane region (helical). At 127–179 (HIWAVVPCIKSFLIEIQCISRVYSIYVHTFCDPLFEAIGKVFSNIRINMQKEI) the chain is on the cytoplasmic side. Residues 132 to 143 (VPCIKSFLIEIQ) form an interacts with SPRY1, SPRY2, SPRY3 and SPRY4 region. 3 S-palmitoyl cysteine lipidation sites follow: cysteine 134, cysteine 144, and cysteine 157. An interacts with SPRY1, SPRY2, and SPRY4 region spans residues 150-161 (SIYVHTFCDPLF). The interval 168 to 179 (FSNIRINMQKEI) is interacts with SPRY1, SPRY2, SPRY3 and SPRY4.

This sequence belongs to the caveolin family. Homooligomer. Interacts with GLIPR2. Interacts with NOSTRIN. Interacts with SNAP25 and STX1A. Interacts (via the N-terminus) with DPP4; the interaction is direct. Interacts with CTNNB1, CDH1 and JUP. Interacts with PACSIN2; this interaction induces membrane tubulation. Interacts with SLC7A9. Interacts with BMX and BTK. Interacts with TGFBR1. Interacts with CAVIN3 (via leucine-zipper domain) in a cholesterol-sensitive manner. Interacts with CAVIN1. Interacts with EHD2 in a cholesterol-dependent manner. Forms a ternary complex with UBXN6 and VCP; mediates CAV1 targeting to lysosomes for degradation. Interacts with ABCG1; this interaction regulates ABCG1-mediated cholesterol efflux. Interacts with NEU3; this interaction enhances NEU3 sialidase activity within caveola. Interacts (via C-terminus) with SPRY1, SPRY2 (via C-terminus), SPRY3, and SPRY4. Interacts with IGFBP5; this interaction allows trafficking of IGFBP5 from the plasma membrane to the nucleus. Phosphorylated at Tyr-14 by ABL1 in response to oxidative stress. Post-translationally, ubiquitinated. Undergo monoubiquitination and multi- and/or polyubiquitination. Monoubiquitination of N-terminal lysines promotes integration in a ternary complex with UBXN6 and VCP which promotes oligomeric CAV1 targeting to lysosomes for degradation. Ubiquitinated by ZNRF1; leading to degradation and modulation of the TLR4-mediated immune response.

The protein resides in the golgi apparatus membrane. It is found in the cell membrane. The protein localises to the membrane. It localises to the caveola. Its subcellular location is the membrane raft. Its function is as follows. May act as a scaffolding protein within caveolar membranes. Forms a stable heterooligomeric complex with CAV2 that targets to lipid rafts and drives caveolae formation. Mediates the recruitment of CAVIN proteins (CAVIN1/2/3/4) to the caveolae. Interacts directly with G-protein alpha subunits and can functionally regulate their activity. Involved in the costimulatory signal essential for T-cell receptor (TCR)-mediated T-cell activation. Its binding to DPP4 induces T-cell proliferation and NF-kappa-B activation in a T-cell receptor/CD3-dependent manner. Recruits CTNNB1 to caveolar membranes and may regulate CTNNB1-mediated signaling through the Wnt pathway. Negatively regulates TGFB1-mediated activation of SMAD2/3 by mediating the internalization of TGFBR1 from membrane rafts leading to its subsequent degradation. Binds 20(S)-hydroxycholesterol (20(S)-OHC). The chain is Caveolin-1 (CAV1) from Eulemur macaco macaco (Black lemur).